We begin with the raw amino-acid sequence, 452 residues long: Flavanone 7-O-glucoside 2''-O-beta-L-rhamnosyltransferase (452 aa).

The active-site Proton acceptor is the H21. H21 contacts an anthocyanidin. Residue D121 is the Charge relay of the active site. A helical membrane pass occupies residues 136 to 156; sequence IAAILFLPLSAVACSFLLHNI. Residues S268, V330, H347, G351, S352, and E355 each contribute to the UDP-beta-L-rhamnose site. Residues 407–436 are a coiled coil; sequence KHVVLQEEAKQIRRKANEISESMKKIGDAE.

This sequence belongs to the UDP-glycosyltransferase family. Monomer. In terms of tissue distribution, expressed in young fruits and leaves.

The protein localises to the membrane. It carries out the reaction flavanone 7-O-beta-D-glucoside + UDP-beta-L-rhamnose = flavanone 7-O-[alpha-L-rhamnosyl-(1-&gt;2)-beta-D-glucoside] + UDP + H(+). Involved in the production of the bitter neohesperidosides in citrus. Shows a strict specificity for UDP-rhamnose as donor. The chain is Flavanone 7-O-glucoside 2''-O-beta-L-rhamnosyltransferase (C12RT1) from Citrus maxima (Pomelo).